Reading from the N-terminus, the 497-residue chain is Tripartite motif-containing protein 5 (497 aa).

Ala-2 bears the N-acetylalanine mark. An RING-type zinc finger spans residues 15-60 (CPICLELLTEPLSLHCGHSFCQACITANHKKSMLYKEGERSCPVCR). Phosphoserine is present on Ser-87. A B box-type zinc finger spans residues 92 to 133 (QKVDHCARHGEKLLLFCQEDSKVICWLCERSQEHRGHHTFLM). Cys-97, His-100, Cys-119, and His-125 together coordinate Zn(2+). Residues 137–225 (AQEYHVKLQT…LTKSETEMVQ (89 aa)) are a coiled coil. Residues 187–200 (FEQLREILDWEESN) form a required for interaction with GABARAP and for autophagy region. The B30.2/SPRY domain occupies 283 to 497 (LKGMLDMFRE…VPMTLCSPSS (215 aa)).

Belongs to the TRIM/RBCC family. As to quaternary structure, can form homodimers and homotrimers. In addition to lower-order dimerization, also exhibits a higher-order multimerization and both low- and high-order multimerizations are essential for its restriction activity. Interacts with MAP3K7/TAK1, TAB2 and TAB3. Interacts with HSPA8/HSC70, PSMC2, PSMC4, PSMC5 and PSMD7. Interacts with SQSTM1. Interacts (via B30.2/SPRY domain) with HSPA1A/B. Interacts with TRIM6 and TRIM34. Interacts with BECN1; GABARAP. Interacts with ULK1 (phosphorylated form), GABARAPL1, GABARAPL2, MAP1LC3A and MAP1LC3C. In terms of processing, degraded in a proteasome-independent fashion in the absence of viral infection but in a proteasome-dependent fashion following exposure to restriction sensitive virus. Autoubiquitinated in a RING finger- and UBE2D2-dependent manner. Monoubiquitinated by TRIM21. Deubiquitinated by Yersinia YopJ. Ubiquitination may not lead to proteasomal degradation.

Its subcellular location is the cytoplasm. It is found in the nucleus. The catalysed reaction is S-ubiquitinyl-[E2 ubiquitin-conjugating enzyme]-L-cysteine + [acceptor protein]-L-lysine = [E2 ubiquitin-conjugating enzyme]-L-cysteine + N(6)-ubiquitinyl-[acceptor protein]-L-lysine.. It participates in protein modification; protein ubiquitination. Capsid-specific restriction factor that prevents infection from non-host-adapted retroviruses. Blocks viral replication early in the life cycle, after viral entry but before reverse transcription. In addition to acting as a capsid-specific restriction factor, also acts as a pattern recognition receptor that activates innate immune signaling in response to the retroviral capsid lattice. Binding to the viral capsid triggers its E3 ubiquitin ligase activity, and in concert with the heterodimeric ubiquitin conjugating enzyme complex UBE2V1-UBE2N (also known as UBC13-UEV1A complex) generates 'Lys-63'-linked polyubiquitin chains, which in turn are catalysts in the autophosphorylation of the MAP3K7/TAK1 complex (includes TAK1, TAB2, and TAB3). Activation of the MAP3K7/TAK1 complex by autophosphorylation results in the induction and expression of NF-kappa-B and MAPK-responsive inflammatory genes, thereby leading to an innate immune response in the infected cell. Restricts infection by human immunodeficiency virus type 1 (HIV-1) and simian immunodeficiency virus (SIV-agm). Plays a role in regulating autophagy through activation of autophagy regulator BECN1 by causing its dissociation from its inhibitors BCL2 and TAB2. Also plays a role in autophagy by acting as a selective autophagy receptor which recognizes and targets HIV-1 capsid protein p24 for autophagic destruction. The chain is Tripartite motif-containing protein 5 (TRIM5) from Macaca mulatta (Rhesus macaque).